The following is a 176-amino-acid chain: HTH-type transcriptional regulator DctR (176 aa).

Positions 109 to 174 (VPEANVSLSR…ELVRHQHIDY (66 aa)) constitute an HTH luxR-type domain. Positions 133–152 (TEDILEKLKISLKTFYCHKH) form a DNA-binding region, H-T-H motif.

Its function is as follows. May act as a transcriptional regulator of dctA. Could be involved in the regulation of the genes coding for the type III secretion system in enterohaemorragic strains. The protein is HTH-type transcriptional regulator DctR (dctR) of Escherichia coli O157:H7.